The chain runs to 450 residues: Protein tweety homolog 1 (450 aa).

The Extracellular portion of the chain corresponds to 1-43 (MGAPPGYRPSAWVHLLHQLPRADFQLRPVPSGFAPRDQEYQQA). The chain crosses the membrane as a helical span at residues 44–64 (LLLVAALAGLGLGLSLIFIAV). The Cytoplasmic portion of the chain corresponds to 65-88 (YLIRFCCCRPPEPHGAKSPPPGGG). The chain crosses the membrane as a helical span at residues 89–109 (CVTWSCIAALLVGCAGIGIGF). Topologically, residues 110–214 (YGNSETSDGV…DVTFVEEYRW (105 aa)) are extracellular. The N-linked (GlcNAc...) asparagine glycan is linked to Asn130. The helical transmembrane segment at 215–235 (LAYVLLLLLVLLVCLFTLLGL) threads the bilayer. Topologically, residues 236–240 (AKQSK) are cytoplasmic. Residues 241 to 261 (WLVVVMTAMSLLVLVLSWGSM) form a helical membrane-spanning segment. Residues 262–390 (GLEAATAVGL…LRGLCEDALE (129 aa)) lie on the Extracellular side of the membrane. Disulfide bonds link Cys275–Cys385 and Cys303–Cys370. 2 N-linked (GlcNAc...) asparagine glycosylation sites follow: Asn284 and Asn355. The helical transmembrane segment at 391–411 (GLLFLMLFSLLSAGALATTLC) threads the bilayer. At 412–450 (SLPRAWALFPPSDDYDDTDDDDPFNPQESKRFVQWQSSI) the chain is on the cytoplasmic side. The segment at 428–450 (DTDDDDPFNPQESKRFVQWQSSI) is disordered. Ser440 carries the post-translational modification Phosphoserine.

This sequence belongs to the tweety family. As to quaternary structure, homotetramer; disulfide-linked. Homodimer. Post-translationally, N-glycosylated. Contains high-mannose, hybrid and complex oligosaccharides. Expressed in the astrocytes (at protein level). Restricted mainly to neural tissues. Strongly expressed in brain and eye.

It localises to the cell membrane. It carries out the reaction chloride(in) = chloride(out). The catalysed reaction is L-glutamate(out) = L-glutamate(in). Inhibited by (4-[(2-butyl-6,7-dichloro-2- cyclopentyl-2,3-dihydro-1-oxo-1H-inden-5-yl)oxy]butanoic acid). Its function is as follows. Calcium-independent, swelling-dependent volume-regulated anion channel (VRAC-swell) which plays a pivotal role in the process of regulatory volume decrease (RVD) in the brain through the efflux of anions like chloride and organic osmolytes like glutamate. This is Protein tweety homolog 1 (Ttyh1) from Mus musculus (Mouse).